The chain runs to 653 residues: DNA-directed RNA polymerase III subunit RPC-3 (653 aa).

Disordered stretches follow at residues 141-186 (INGV…DSDP), 280-309 (DSSAPRKRLKLDGPLEDDVKDEDDGDDFSD), and 422-442 (IKEDEDDEDEEGGPVSMKRRG). The span at 159 to 170 (AENHTDHAHDYQ) shows a compositional bias: basic and acidic residues. 2 stretches are compositionally biased toward acidic residues: residues 293 to 309 (PLEDDVKDEDDGDDFSD) and 424 to 433 (EDEDDEDEEG). The tract at residues 580–601 (TYKSMSRCLQRIRVEREKLKFL) is leucine-zipper.

Belongs to the RNA polymerase beta chain family. Component of the RNA polymerase III (Pol III) complex consisting of 17 subunits.

It is found in the nucleus. Functionally, DNA-dependent RNA polymerase catalyzes the transcription of DNA into RNA using the four ribonucleoside triphosphates as substrates. Specific core component of RNA polymerase III which synthesizes small RNAs, such as 5S rRNA and tRNAs. This chain is DNA-directed RNA polymerase III subunit RPC-3 (RPC-82), found in Coccidioides immitis (strain RS) (Valley fever fungus).